Consider the following 304-residue polypeptide: MDFNNYIGLESDDRLNAFMATLSVTNRTPEYYVNWEKVERETRKFELELNTLNYLIGKEDIYSEALELFTNQPELLKAIPSLIASRDTSLDILNIDENDDMSFEQLNFLVIDENCIADYVDFINQAGLLDFLQNKAKRSLVDYVYGVEAGLDSNARKTRSGTTMEGILERTVSKIAQGKGLDWKPQATASFIKSQWDIEVPVDKSKRRFDAAVYSRALNKVWLIETNYYGGGGSKLKAVAGEFTELSQFVKTSKDNVEFVWVTDGQGWKFSRLPLAEAFGHIDNVFNLTMLKEGFLSDLFEKEI.

Belongs to the DpnII type II restriction endonuclease family.

It catalyses the reaction Endonucleolytic cleavage of DNA to give specific double-stranded fragments with terminal 5'-phosphates.. Its function is as follows. A P subtype restriction enzyme that recognizes the double-stranded unmethylated sequence 5'-GATC-3' and cleaves before G-1. The chain is Type II restriction enzyme LlaDCHI (llaDCHIR) from Lactococcus lactis subsp. cremoris (Streptococcus cremoris).